Consider the following 70-residue polypeptide: Large ribosomal subunit protein uL30 (70 aa).

It belongs to the universal ribosomal protein uL30 family. Part of the 50S ribosomal subunit.

This chain is Large ribosomal subunit protein uL30, found in Renibacterium salmoninarum (strain ATCC 33209 / DSM 20767 / JCM 11484 / NBRC 15589 / NCIMB 2235).